A 564-amino-acid chain; its full sequence is CTP synthase (564 aa).

The interval 1–265 is amidoligase domain; the sequence is MTKFVFVTGG…DEIVCHRLDI (265 aa). Ser-13 provides a ligand contact to CTP. Ser-13 is a UTP binding site. ATP-binding positions include 14–19 and Asp-71; that span reads SLGKGI. Mg(2+) is bound by residues Asp-71 and Glu-139. Residues 146–148, 186–191, and Lys-222 contribute to the CTP site; these read DIE and KTKPTQ. UTP is bound by residues 186–191 and Lys-222; that span reads KTKPTQ. In terms of domain architecture, Glutamine amidotransferase type-1 spans 290-543; the sequence is SIALVGKYVD…IQAAISFAGQ (254 aa). Gly-351 contributes to the L-glutamine binding site. Cys-378 serves as the catalytic Nucleophile; for glutamine hydrolysis. L-glutamine is bound by residues 379–382, Glu-402, and Arg-469; that span reads LGMQ. Catalysis depends on residues His-516 and Glu-518.

This sequence belongs to the CTP synthase family. Homotetramer.

It catalyses the reaction UTP + L-glutamine + ATP + H2O = CTP + L-glutamate + ADP + phosphate + 2 H(+). The enzyme catalyses L-glutamine + H2O = L-glutamate + NH4(+). The catalysed reaction is UTP + NH4(+) + ATP = CTP + ADP + phosphate + 2 H(+). The protein operates within pyrimidine metabolism; CTP biosynthesis via de novo pathway; CTP from UDP: step 2/2. Allosterically activated by GTP, when glutamine is the substrate; GTP has no effect on the reaction when ammonia is the substrate. The allosteric effector GTP functions by stabilizing the protein conformation that binds the tetrahedral intermediate(s) formed during glutamine hydrolysis. Inhibited by the product CTP, via allosteric rather than competitive inhibition. Functionally, catalyzes the ATP-dependent amination of UTP to CTP with either L-glutamine or ammonia as the source of nitrogen. Regulates intracellular CTP levels through interactions with the four ribonucleotide triphosphates. This Nitrosomonas europaea (strain ATCC 19718 / CIP 103999 / KCTC 2705 / NBRC 14298) protein is CTP synthase.